The following is a 364-amino-acid chain: NADH-quinone oxidoreductase subunit H (364 aa).

The next 8 helical transmembrane spans lie at 21 to 41 (AGQI…LLLA), 88 to 108 (VFLL…AVIP), 120 to 140 (VGIL…IMGG), 159 to 179 (MVSY…LAGS), 208 to 228 (LPLL…GLAE), 267 to 287 (IVLI…APFP), 301 to 321 (FYYF…VSMA), and 340 to 360 (VFLP…VFGP).

It belongs to the complex I subunit 1 family. In terms of assembly, NDH-1 is composed of 14 different subunits. Subunits NuoA, H, J, K, L, M, N constitute the membrane sector of the complex.

The protein resides in the cell inner membrane. It carries out the reaction a quinone + NADH + 5 H(+)(in) = a quinol + NAD(+) + 4 H(+)(out). NDH-1 shuttles electrons from NADH, via FMN and iron-sulfur (Fe-S) centers, to quinones in the respiratory chain. The immediate electron acceptor for the enzyme in this species is believed to be ubiquinone. Couples the redox reaction to proton translocation (for every two electrons transferred, four hydrogen ions are translocated across the cytoplasmic membrane), and thus conserves the redox energy in a proton gradient. This subunit may bind ubiquinone. In Phenylobacterium zucineum (strain HLK1), this protein is NADH-quinone oxidoreductase subunit H.